Reading from the N-terminus, the 543-residue chain is Chaperonin GroEL 2 (543 aa).

Residues 29-32 (TLGP), 86-90 (DGTTT), Gly-413, and Asp-495 each bind ATP. The disordered stretch occupies residues 524–543 (KPEPKENAPTGAGMGGDFDY).

This sequence belongs to the chaperonin (HSP60) family. Forms a cylinder of 14 subunits composed of two heptameric rings stacked back-to-back. Interacts with the co-chaperonin GroES.

It localises to the cytoplasm. It carries out the reaction ATP + H2O + a folded polypeptide = ADP + phosphate + an unfolded polypeptide.. Functionally, together with its co-chaperonin GroES, plays an essential role in assisting protein folding. The GroEL-GroES system forms a nano-cage that allows encapsulation of the non-native substrate proteins and provides a physical environment optimized to promote and accelerate protein folding. The chain is Chaperonin GroEL 2 from Acaryochloris marina (strain MBIC 11017).